A 160-amino-acid chain; its full sequence is SsrA-binding protein (160 aa).

It belongs to the SmpB family.

The protein resides in the cytoplasm. In terms of biological role, required for rescue of stalled ribosomes mediated by trans-translation. Binds to transfer-messenger RNA (tmRNA), required for stable association of tmRNA with ribosomes. tmRNA and SmpB together mimic tRNA shape, replacing the anticodon stem-loop with SmpB. tmRNA is encoded by the ssrA gene; the 2 termini fold to resemble tRNA(Ala) and it encodes a 'tag peptide', a short internal open reading frame. During trans-translation Ala-aminoacylated tmRNA acts like a tRNA, entering the A-site of stalled ribosomes, displacing the stalled mRNA. The ribosome then switches to translate the ORF on the tmRNA; the nascent peptide is terminated with the 'tag peptide' encoded by the tmRNA and targeted for degradation. The ribosome is freed to recommence translation, which seems to be the essential function of trans-translation. In Nocardia farcinica (strain IFM 10152), this protein is SsrA-binding protein.